The primary structure comprises 207 residues: Thiamine-phosphate synthase (207 aa).

Residues 35 to 39 and asparagine 67 each bind 4-amino-2-methyl-5-(diphosphooxymethyl)pyrimidine; that span reads QYRDK. The Mg(2+) site is built by aspartate 68 and aspartate 86. Threonine 105 is a 4-amino-2-methyl-5-(diphosphooxymethyl)pyrimidine binding site. 132–134 serves as a coordination point for 2-[(2R,5Z)-2-carboxy-4-methylthiazol-5(2H)-ylidene]ethyl phosphate; it reads SVT. Residue lysine 135 coordinates 4-amino-2-methyl-5-(diphosphooxymethyl)pyrimidine. Glycine 162 contributes to the 2-[(2R,5Z)-2-carboxy-4-methylthiazol-5(2H)-ylidene]ethyl phosphate binding site.

It belongs to the thiamine-phosphate synthase family. It depends on Mg(2+) as a cofactor.

It catalyses the reaction 2-[(2R,5Z)-2-carboxy-4-methylthiazol-5(2H)-ylidene]ethyl phosphate + 4-amino-2-methyl-5-(diphosphooxymethyl)pyrimidine + 2 H(+) = thiamine phosphate + CO2 + diphosphate. The catalysed reaction is 2-(2-carboxy-4-methylthiazol-5-yl)ethyl phosphate + 4-amino-2-methyl-5-(diphosphooxymethyl)pyrimidine + 2 H(+) = thiamine phosphate + CO2 + diphosphate. It carries out the reaction 4-methyl-5-(2-phosphooxyethyl)-thiazole + 4-amino-2-methyl-5-(diphosphooxymethyl)pyrimidine + H(+) = thiamine phosphate + diphosphate. The protein operates within cofactor biosynthesis; thiamine diphosphate biosynthesis; thiamine phosphate from 4-amino-2-methyl-5-diphosphomethylpyrimidine and 4-methyl-5-(2-phosphoethyl)-thiazole: step 1/1. Its function is as follows. Condenses 4-methyl-5-(beta-hydroxyethyl)thiazole monophosphate (THZ-P) and 2-methyl-4-amino-5-hydroxymethyl pyrimidine pyrophosphate (HMP-PP) to form thiamine monophosphate (TMP). This is Thiamine-phosphate synthase from Pseudomonas putida (strain W619).